The chain runs to 699 residues: Large T antigen (699 aa).

Met-1 carries the N-acetylmethionine; by host modification. The 64-residue stretch at 12 to 75 folds into the J domain; sequence ELMDLLGLER…VKVAHQPDFG (64 aa). Positions 105–109 match the LXCXE motif motif; sequence LFCHE. Ser-114, Ser-122, and Ser-125 each carry phosphoserine; by host. The segment at 115 to 137 is disordered; it reads DEEGTADSQHSTPPKKKRKVEDP. Thr-126 is modified (phosphothreonine; by host). The Nuclear localization signal motif lies at 127-134; it reads PPKKKRKV. The segment at residues 141–256 is a DNA-binding region (T-ag OBD); the sequence is PPDLHAFLSQ…EESIQGGLKE (116 aa). The T-ag D1-type zinc finger occupies 267-359; it reads TKQVSWKLIT…KRVDTLHMTR (93 aa). Positions 304, 307, 315, and 319 each coordinate Zn(2+). Residues 402–562 form the SF3 helicase domain; sequence KMDTLIYDFL…IYLRKALNNS (161 aa). 428–435 lines the ATP pocket; the sequence is GPIDSGKT. The interval 637-678 is disordered; it reads ETEDSGHGSSTESQSQCFSQASDTSGSADAPASQTPDPYDHD. Residues 643 to 672 show a composition bias toward polar residues; that stretch reads HGSSTESQSQCFSQASDTSGSADAPASQTP. Ser-661 carries the post-translational modification Phosphoserine; by host. Lys-691 carries the post-translational modification N6-acetyllysine; by host. Thr-695 carries the phosphothreonine; by host modification.

Forms homohexamers in the presence of ATP. Interacts with host HDAC1. Interacts (via LXCXE domain) with host RB1; the interaction induces the aberrant dissociation of RB1-E2F1 complex thereby disrupting RB1's activity. Interacts (via LXCXE domain) with host pRB-related proteins RBL1 and RBL2. Interacts (via C-terminus) with host TOP1 and POLA1 allowing DNA replication. Interacts with host TP53, inhibiting TP53 binding to DNA. Interacts with host preinitiation complex components TBP, TFIIA and TFIID to regulate transcription initiation. Mg(2+) serves as cofactor. Post-translationally, phosphorylated on both serine and threonine residues. Small t antigen inhibits the dephosphorylation by the AC form of PP2A. In terms of processing, O-Glycosylated near the C-terminal region. Acetylated by CBP in a TP53-dependent manner.

It localises to the host nucleus. It carries out the reaction Couples ATP hydrolysis with the unwinding of duplex DNA by translocating in the 3'-5' direction.. It catalyses the reaction ATP + H2O = ADP + phosphate + H(+). In terms of biological role, isoform large T antigen is a key early protein essential for both driving viral replication and inducing cellular transformation. Plays a role in viral genome replication by driving entry of quiescent cells into the cell cycle and by autoregulating the synthesis of viral early mRNA. Displays highly oncogenic activities by corrupting the host cellular checkpoint mechanisms that guard cell division and the transcription, replication, and repair of DNA. Participates in the modulation of cellular gene expression preceeding viral DNA replication. This step involves binding to host key cell cycle regulators retinoblastoma protein RB1/pRb and TP53. Induces the disassembly of host E2F1 transcription factors from RB1, thus promoting transcriptional activation of E2F1-regulated S-phase genes. Inhibits host TP53 binding to DNA, abrogating the ability of TP53 to stimulate gene expression. Plays the role of a TFIID-associated factor (TAF) in transcription initiation for all three RNA polymerases, by stabilizing the TBP-TFIIA complex on promoters. Initiates viral DNA replication and unwinding via interactions with the viral origin of replication. Binds two adjacent sites in the SV40 origin. The replication fork movement is facilitated by Large T antigen helicase activity. Has processive 3'-5' DNA helicase activity which requires a short 3' single-stranded region and ATP. Activates the transcription of viral late mRNA, through host TBP and TFIIA stabilization. Interferes with histone deacetylation mediated by HDAC1, leading to activation of transcription. The sequence is that of Large T antigen from Papio hamadryas ursinus (Chacma baboon).